A 355-amino-acid chain; its full sequence is 3-dehydroquinate synthase (355 aa).

Residues 105-109, 129-130, Lys-142, Lys-151, and 169-172 each bind NAD(+); these read GVVGD, TS, and TLKT. Positions 184, 246, and 263 each coordinate Zn(2+).

Belongs to the sugar phosphate cyclases superfamily. Dehydroquinate synthase family. The cofactor is NAD(+). Co(2+) is required as a cofactor. Requires Zn(2+) as cofactor.

Its subcellular location is the cytoplasm. It carries out the reaction 7-phospho-2-dehydro-3-deoxy-D-arabino-heptonate = 3-dehydroquinate + phosphate. It participates in metabolic intermediate biosynthesis; chorismate biosynthesis; chorismate from D-erythrose 4-phosphate and phosphoenolpyruvate: step 2/7. Functionally, catalyzes the conversion of 3-deoxy-D-arabino-heptulosonate 7-phosphate (DAHP) to dehydroquinate (DHQ). This Streptococcus agalactiae serotype V (strain ATCC BAA-611 / 2603 V/R) protein is 3-dehydroquinate synthase.